The primary structure comprises 245 residues: NAD-dependent protein deacylase (245 aa).

In terms of domain architecture, Deacetylase sirtuin-type spans 1–237 (MNFPYRNIVV…PKLVEELLAH (237 aa)). 13–32 (GAGISAESGIQTFRAQDGLW) is a binding site for NAD(+). Substrate-binding residues include tyrosine 57 and arginine 60. 94–97 (QNID) is an NAD(+) binding site. Residue histidine 112 is the Proton acceptor of the active site. Residues cysteine 120 and cysteine 139 each contribute to the Zn(2+) site. Residues 179–181 (GTS), 205–207 (NLE), and alanine 223 contribute to the NAD(+) site.

The protein belongs to the sirtuin family. Class III subfamily. The cofactor is Zn(2+).

It localises to the cytoplasm. The enzyme catalyses N(6)-acetyl-L-lysyl-[protein] + NAD(+) + H2O = 2''-O-acetyl-ADP-D-ribose + nicotinamide + L-lysyl-[protein]. It carries out the reaction N(6)-succinyl-L-lysyl-[protein] + NAD(+) + H2O = 2''-O-succinyl-ADP-D-ribose + nicotinamide + L-lysyl-[protein]. Its function is as follows. NAD-dependent lysine deacetylase and desuccinylase that specifically removes acetyl and succinyl groups on target proteins. Modulates the activities of several proteins which are inactive in their acylated form. The protein is NAD-dependent protein deacylase of Vibrio vulnificus (strain CMCP6).